The primary structure comprises 419 residues: Variant surface glycoprotein YnAT 1.1 (419 aa).

The N-terminal stretch at 1–28 (MKRVLSNVLKAWIFTIVAFHNFSTSVTA) is a signal peptide. N-linked (GlcNAc...) asparagine glycosylation is found at N82 and N358. Positions 369–405 (ESSRPPSTDANTSQKGPLQRPEKSGESSHLPSGSSHG) are disordered. A compositionally biased stretch (polar residues) spans 372–384 (RPPSTDANTSQKG). N379 carries an N-linked (GlcNAc...) (high mannose) asparagine glycan. Residues 395–405 (SSHLPSGSSHG) are compositionally biased toward low complexity. Residue S400 is the site of GPI-anchor amidated serine attachment. The propeptide at 401–419 (GSSHGTKAIRSILHVALLM) is removed in mature form.

Its subcellular location is the cell membrane. VSG forms a coat on the surface of the parasite. The trypanosome evades the immune response of the host by expressing a series of antigenically distinct VSGs from an estimated 1000 VSG genes. This chain is Variant surface glycoprotein YnAT 1.1, found in Trypanosoma congolense.